A 216-amino-acid chain; its full sequence is 3-isopropylmalate dehydratase small subunit 1 (216 aa).

The protein belongs to the LeuD family. LeuD type 1 subfamily. In terms of assembly, heterodimer of LeuC and LeuD.

The enzyme catalyses (2R,3S)-3-isopropylmalate = (2S)-2-isopropylmalate. Its pathway is amino-acid biosynthesis; L-leucine biosynthesis; L-leucine from 3-methyl-2-oxobutanoate: step 2/4. Its function is as follows. Catalyzes the isomerization between 2-isopropylmalate and 3-isopropylmalate, via the formation of 2-isopropylmaleate. This Bordetella bronchiseptica (strain ATCC BAA-588 / NCTC 13252 / RB50) (Alcaligenes bronchisepticus) protein is 3-isopropylmalate dehydratase small subunit 1.